The primary structure comprises 690 residues: MHSLKRRRNHAPDWQDFYKNGVPQEVIVIEDSASPRLTPNLPPPFSVHQLQSFVPPQPPSSSSPSTTGTVAVPINGANAVYPSTNSVSLPQSYDPWLDANGVVPLPHDVASHPSYMVQSPTSYHACSNNQSPFPHSHHPPLHNPLPVSCQPVLRPPPVPQVPSHWYPVSLPSPNLPHQPISKPPVIPNLPKLQVHPNRLPHPIHNHPYSSPTSYPPPLCPATYCPSNPPQLAPATAIAPSSQSSQHKSVNYSVTPSSINNHTAVPLSPTLAVWLPMTQPTFQPPSANVYQPASNANQVITPVSISDYRPPKKRKRAAWPPYKKVDRVNVPVVHDTTAFDPSTFDDDDGHYKVVPNSKFANRYTVVRLLGHGTFGKVIQCYDQSTGRHCAIKVTRAIPKYREASLIELRVLQTIAHSDPTNENKCIQLRDYFDYRKHICIVTDLFGWSVFDFLKNNNYIPFPLKHIQMLSQQLFKSVAFLHSLGLVHTDLKPENVLLVSNASRTIRLPYRNYSQKVLNSCEIRLIDFGSATFEDEYHSSVVSTRHYRAPEIILGLGWSYPCDVWSIGCILVELFTGQALFQTHEDSEHLCMMEKILGPFDRNMISRSSRTSQRFFKSDGKVRYPLSNTPKKSINYLQSLQTLEQIFAVSSPEVALLLDLLKKVFVYDPKRRITAKEALWHPFFTQPISSNL.

The tract at residues 39-70 (PNLPPPFSVHQLQSFVPPQPPSSSSPSTTGTV) is disordered. One can recognise a Protein kinase domain in the interval 362–682 (YTVVRLLGHG…AKEALWHPFF (321 aa)). ATP contacts are provided by residues 368–376 (LGHGTFGKV) and Lys-391. The Proton acceptor role is filled by Asp-488.

This sequence belongs to the protein kinase superfamily. CMGC Ser/Thr protein kinase family. Lammer subfamily. In terms of processing, autophosphorylates on all three types of residues.

It carries out the reaction L-seryl-[protein] + ATP = O-phospho-L-seryl-[protein] + ADP + H(+). The catalysed reaction is L-threonyl-[protein] + ATP = O-phospho-L-threonyl-[protein] + ADP + H(+). The enzyme catalyses L-tyrosyl-[protein] + ATP = O-phospho-L-tyrosyl-[protein] + ADP + H(+). In terms of biological role, protein kinase that may act as a negative regulator of filamentous growth and flocculation. Appears to have a role in normal cell wall and septum formation and in cell separation. May have antagonistic function in the regulation of beta-glucan distribution between the sites for cell wall and septum assembly. This Schizosaccharomyces pombe (strain 972 / ATCC 24843) (Fission yeast) protein is Dual specificity protein kinase lkh1 (lkh1).